The following is a 301-amino-acid chain: Homoserine kinase (301 aa).

ATP is bound at residue 89–99 (KPGSGLGSSSA).

This sequence belongs to the GHMP kinase family. Homoserine kinase subfamily.

Its subcellular location is the cytoplasm. It carries out the reaction L-homoserine + ATP = O-phospho-L-homoserine + ADP + H(+). It participates in amino-acid biosynthesis; L-threonine biosynthesis; L-threonine from L-aspartate: step 4/5. Catalyzes the ATP-dependent phosphorylation of L-homoserine to L-homoserine phosphate. The chain is Homoserine kinase from Methanococcus maripaludis (strain DSM 14266 / JCM 13030 / NBRC 101832 / S2 / LL).